We begin with the raw amino-acid sequence, 992 residues long: Leucine-rich repeat receptor-like serine/threonine-protein kinase BAM3 (992 aa).

The N-terminal stretch at 1 to 21 is a signal peptide; the sequence is MADKIFTFFLILSSISPLLCS. Over 22 to 656 the chain is Extracellular; it reads SLISPLNLSL…ARSRGEISAK (635 aa). Asn-28 is a glycosylation site (N-linked (GlcNAc...) asparagine). Cys-64 and Cys-71 are oxidised to a cystine. Residues Asn-75 and Asn-87 are each glycosylated (N-linked (GlcNAc...) asparagine). LRR repeat units lie at residues 75–99, 100–124, 126–148, 150–173, 174–199, and 201–221; these read NQSI…ISRL, SPSL…IYEL, GLEV…GFSQ, TQLV…LTTL, TRLE…SFLS, and KFLS…LANI. Residues Asn-131 and Asn-163 are each glycosylated (N-linked (GlcNAc...) asparagine). The N-linked (GlcNAc...) asparagine glycan is linked to Asn-220. Positions 226-231 match the CLE45 peptide binding motif; the sequence is QLYLGY. 15 LRR repeats span residues 246 to 270, 271 to 294, 296 to 320, 322 to 342, 343 to 366, 368 to 391, 393 to 414, 415 to 438, 439 to 462, 465 to 489, 491 to 513, 514 to 536, 537 to 561, 563 to 585, and 586 to 610; these read LINL…LGNL, KNLE…LGNM, SLKT…GLQK, QLFN…VSEL, PDLQ…LGSN, NLIE…CFGR, LKIL…LGQC, EPLW…LIYL, PNLS…EAGN, FSSL…IRNL, SLQI…IGSL, KSLL…EFGD, CMSL…ISQI, ILNY…LGYM, and KSLT…QFSY. N-linked (GlcNAc...) asparagine glycosylation is found at Asn-256 and Asn-293. Asn-354 carries N-linked (GlcNAc...) asparagine glycosylation. Asn-440 and Asn-472 each carry an N-linked (GlcNAc...) asparagine glycan. Asn-525 carries N-linked (GlcNAc...) asparagine glycosylation. Residues Asn-568, Asn-575, Asn-597, Asn-613, Asn-631, and Asn-635 are each glycosylated (N-linked (GlcNAc...) asparagine). A helical membrane pass occupies residues 657 to 677; that stretch reads FKLFFGLGLLGFFLVFVVLAV. At 678–992 the chain is on the cytoplasmic side; that stretch reads VKNRRMRKNN…ISQAKQPNTF (315 aa). The region spanning 710–992 is the Protein kinase domain; the sequence is VKENHVIGKG…ISQAKQPNTF (283 aa). Residues 716-724 and Lys-738 each bind ATP; that span reads IGKGGRGIV. Asp-836 (proton acceptor) is an active-site residue.

It belongs to the protein kinase superfamily. Ser/Thr protein kinase family. Interacts with CLE45, especially in roots. Binds to the dimer CLV2/CRN. Expressed in seedlings, roots, leaves, stems, inflorescences, flowers and siliques. In roots, confined to protophloem and sieve element precursor cells.

It is found in the cell membrane. The protein localises to the endoplasmic reticulum membrane. It catalyses the reaction L-seryl-[protein] + ATP = O-phospho-L-seryl-[protein] + ADP + H(+). The catalysed reaction is L-threonyl-[protein] + ATP = O-phospho-L-threonyl-[protein] + ADP + H(+). In terms of biological role, necessary for male gametophyte development, as well as ovule specification and function. Required for the development of high-ordered vascular strands within the leaf and a correlated control of leaf shape, size and symmetry. LRR-rich receptor-like kinase (LRR-RLK) involved in the perception of CLE45 peptide ligand which mediates root growth inhibition by repressing protophloem differentiation; this mechanism requires CRN. BRX, BAM3, and CLE45 act together to regulate the transition of protophloem cells from proliferation to differentiation, thus impinging on postembryonic growth capacity of the root meristem. Necessary for CLE45 peptide-triggered accumulation of MAKR5 in developing sieve elements. This is Leucine-rich repeat receptor-like serine/threonine-protein kinase BAM3 from Arabidopsis thaliana (Mouse-ear cress).